Reading from the N-terminus, the 357-residue chain is Putative DENN domain-containing protein 10 B (357 aa).

One can recognise a uDENN domain in the interval 1-140 (MAAAELADTQ…TKGICQSEEN (140 aa)). The cDENN domain occupies 159-299 (IKDIVSQFGM…PEKSESQVIQ (141 aa)). Positions 301-357 (IALKTREIFTNLAPFSEVSADGEKRVLNLEALKQKRFPPATENFLYHLAAAEQMLKI) constitute a dDENN domain.

Belongs to the DENND10 family.

It is found in the late endosome. May be a guanine nucleotide exchange factor (GEF). This Homo sapiens (Human) protein is Putative DENN domain-containing protein 10 B.